Consider the following 198-residue polypeptide: NAD(P)H-quinone oxidoreductase chain 6 (198 aa).

5 helical membrane passes run 9 to 29, 32 to 52, 61 to 81, 100 to 120, and 145 to 165; these read YISFLILAFLVIGAALGVVLL, IVYSAFLLGGVFLSISGIYIL, AQVLVYVGAVSVLILFAIMLV, TALVCTGIFALLSTMVLITPW, and LLPFELASVLLLMAMVGAIIL.

Belongs to the complex I subunit 6 family.

It is found in the membrane. It carries out the reaction a plastoquinone + NADH + (n+1) H(+)(in) = a plastoquinol + NAD(+) + n H(+)(out). The enzyme catalyses a plastoquinone + NADPH + (n+1) H(+)(in) = a plastoquinol + NADP(+) + n H(+)(out). NDH-1 shuttles electrons from NAD(P)H, via FMN and iron-sulfur (Fe-S) centers, to quinones in the respiratory chain. The immediate electron acceptor for the enzyme in this species is believed to be plastoquinone. Couples the redox reaction to proton translocation (for every two electrons transferred, four hydrogen ions are translocated across the cytoplasmic membrane), and thus conserves the redox energy in a proton gradient. This is NAD(P)H-quinone oxidoreductase chain 6 (ndhG) from Synechocystis sp. (strain ATCC 27184 / PCC 6803 / Kazusa).